A 227-amino-acid polypeptide reads, in one-letter code: NAD(P)H-quinone oxidoreductase subunit K, chloroplastic (227 aa).

The [4Fe-4S] cluster site is built by cysteine 43, cysteine 44, cysteine 108, and cysteine 139.

This sequence belongs to the complex I 20 kDa subunit family. NDH is composed of at least 16 different subunits, 5 of which are encoded in the nucleus. Requires [4Fe-4S] cluster as cofactor.

It is found in the plastid. It localises to the chloroplast thylakoid membrane. It catalyses the reaction a plastoquinone + NADH + (n+1) H(+)(in) = a plastoquinol + NAD(+) + n H(+)(out). The catalysed reaction is a plastoquinone + NADPH + (n+1) H(+)(in) = a plastoquinol + NADP(+) + n H(+)(out). In terms of biological role, NDH shuttles electrons from NAD(P)H:plastoquinone, via FMN and iron-sulfur (Fe-S) centers, to quinones in the photosynthetic chain and possibly in a chloroplast respiratory chain. The immediate electron acceptor for the enzyme in this species is believed to be plastoquinone. Couples the redox reaction to proton translocation, and thus conserves the redox energy in a proton gradient. The sequence is that of NAD(P)H-quinone oxidoreductase subunit K, chloroplastic from Ranunculus macranthus (Large buttercup).